Reading from the N-terminus, the 87-residue chain is Large ribosomal subunit protein eL31 (87 aa).

This sequence belongs to the eukaryotic ribosomal protein eL31 family.

This is Large ribosomal subunit protein eL31 from Methanocorpusculum labreanum (strain ATCC 43576 / DSM 4855 / Z).